Reading from the N-terminus, the 145-residue chain is uncharacterized protein (145 aa).

This is an uncharacterized protein from Synechocystis sp. (strain ATCC 27184 / PCC 6803 / Kazusa).